Here is a 570-residue protein sequence, read N- to C-terminus: Phosphoenolpyruvate-protein phosphotransferase (570 aa).

Histidine 189 serves as the catalytic Tele-phosphohistidine intermediate. Residues arginine 296 and arginine 332 each contribute to the phosphoenolpyruvate site. The Mg(2+) site is built by glutamate 431 and aspartate 455. Phosphoenolpyruvate is bound by residues asparagine 454–aspartate 455 and arginine 465. Cysteine 502 serves as the catalytic Proton donor.

The protein belongs to the PEP-utilizing enzyme family. Homodimer. Interacts with FloT. The cofactor is Mg(2+).

Its subcellular location is the cytoplasm. It is found in the membrane raft. It carries out the reaction L-histidyl-[protein] + phosphoenolpyruvate = N(pros)-phospho-L-histidyl-[protein] + pyruvate. General (non sugar-specific) component of the phosphoenolpyruvate-dependent sugar phosphotransferase system (sugar PTS). This major carbohydrate active-transport system catalyzes the phosphorylation of incoming sugar substrates concomitantly with their translocation across the cell membrane. Enzyme I transfers the phosphoryl group from phosphoenolpyruvate (PEP) to the phosphoryl carrier protein (HPr). The protein is Phosphoenolpyruvate-protein phosphotransferase (ptsI) of Bacillus subtilis (strain 168).